We begin with the raw amino-acid sequence, 466 residues long: Argininosuccinate lyase (466 aa).

This sequence belongs to the lyase 1 family. Argininosuccinate lyase subfamily.

It localises to the cytoplasm. It carries out the reaction 2-(N(omega)-L-arginino)succinate = fumarate + L-arginine. It functions in the pathway amino-acid biosynthesis; L-arginine biosynthesis; L-arginine from L-ornithine and carbamoyl phosphate: step 3/3. This Brucella canis (strain ATCC 23365 / NCTC 10854 / RM-666) protein is Argininosuccinate lyase.